The chain runs to 52 residues: Teratocyte protein CftICK-I (52 aa).

Residues 1–19 form the signal peptide; sequence MYKLCILFLVVIFAVMAIA. 3 disulfide bridges follow: C22–C37, C29–C41, and C36–C51.

In terms of tissue distribution, abundantly expressed by teratocytes, which are extra-embryonic cells released by parasitoid wasps into their hosts during larval eclosion.

The protein localises to the secreted. This endoparasitoid wasp peptide has immununosuppressive, antimicrobial and insecticidal activities. Suppress cellular immunity which is detectable as a reduction of hemocyte encapsulation in the host. Shows potent antifungal activity against C.albicans (MIC~0.25 ug/ml). In vivo, ingestion of this peptide (probably at excessive doses) increases larval mortality and reduces leaf consumption of D.saccharalis, a permissive host for C.flavipes. The sequence is that of Teratocyte protein CftICK-I from Cotesia flavipes (Parasitic wasp).